Consider the following 216-residue polypeptide: Phosphorylated carbohydrates phosphatase TM_1254 (216 aa).

Asp7 functions as the Nucleophile in the catalytic mechanism.

Belongs to the HAD-like hydrolase superfamily. It depends on Co(2+) as a cofactor. Requires Mg(2+) as cofactor. The cofactor is Mn(2+). Ni(2+) serves as cofactor.

Its function is as follows. Displays high phosphatase activity toward erythrose 4-phosphate, fructose 6-phosphate, 2-deoxyglucose 6-phosphate, and mannose 6-phosphate. May have a role in the intracellular metabolism of many phosphorylated carbohydrates. This is Phosphorylated carbohydrates phosphatase TM_1254 from Thermotoga maritima (strain ATCC 43589 / DSM 3109 / JCM 10099 / NBRC 100826 / MSB8).